Reading from the N-terminus, the 603-residue chain is Geraniol synthase, chloroplastic (603 aa).

A chloroplast-targeting transit peptide spans 1-50 (MALQMIAPFLSSFLPNPRHSLAAHGLTHQKCVSKHISCSTTTPTYSTTVP). Residues Arg301, Asp338, Asp342, Arg479, and Asp482 each contribute to the (2E)-geranyl diphosphate site. Mg(2+) is bound by residues Asp338 and Asp342. A DDXXD motif motif is present at residues 338 to 342 (DDIYD). 3 residues coordinate Mg(2+): Asp482, Thr486, and Glu490.

This sequence belongs to the terpene synthase family. Tpsb subfamily. In terms of assembly, homodimer. Mg(2+) serves as cofactor. The cofactor is Mn(2+). Expressed in the oil cells of the leaves.

The protein localises to the plastid. It localises to the chloroplast. It carries out the reaction (2E)-geranyl diphosphate + H2O = (2E)-geraniol + diphosphate. It participates in secondary metabolite biosynthesis; terpenoid biosynthesis. Its function is as follows. Monoterpene synthase that catalyzes the formation of geraniol from geranyl diphosphate. This Cinnamomum tenuipile (Alseodaphne mollis) protein is Geraniol synthase, chloroplastic (GerS).